We begin with the raw amino-acid sequence, 394 residues long: Mucosal addressin cell adhesion molecule 1 (394 aa).

Positions 1 to 19 are cleaved as a signal peptide; that stretch reads MEPILALLLALGPFQLSRG. Ig-like domains lie at 20-107, 108-225, and 256-345; these read QSFQ…ILVY, AFPD…TSPE, and PSTP…YVTG. Over 20–353 the chain is Extracellular; sequence QSFQVNPPEP…TGQVIPNPSS (334 aa). N-linked (GlcNAc...) asparagine glycosylation is present at Asn42. Intrachain disulfides connect Cys43/Cys89, Cys47/Cys93, and Cys130/Cys198. Residues 219–255 form a mucin-like region; sequence QSQTSPEPPSTTSAKPYILTSSHTTKAVSTGLSSVAL. A disulfide bridge connects residues Cys282 and Cys330. The chain crosses the membrane as a helical span at residues 354 to 374; the sequence is MVALWIGSLVLGLLALAFLAY. The Cytoplasmic portion of the chain corresponds to 375–394; sequence CLWKRYRPGPLPDSSSCTLL.

In terms of assembly, homodimer. In terms of tissue distribution, detected in Peyer patches and mesenteric lymph nodes but not in spleen.

The protein localises to the membrane. Cell adhesion leukocyte receptor expressed by mucosal venules, helps to direct lymphocyte traffic into mucosal tissues including the Peyer patches and the intestinal lamina propria. It can bind both the integrin alpha-4/beta-7 and L-selectin, regulating both the passage and retention of leukocytes. This is Mucosal addressin cell adhesion molecule 1 (Madcam1) from Rattus norvegicus (Rat).